The chain runs to 233 residues: MHLPESLHDLADNETVRFLRRPKSISRIFGGVFSLVIFSSLLTDGYQNRTESPQLRCVLNSNHMACSFAVGAGFLSFLSCLVFLAIDAYERRLVGTRFKIAFQLLDFILAVLWAGVWFVAFCFLASQWQHSKSKHFLLGNSSAKAAIALSFFSVPVWILQAYLAFQDLRDEAPVPYKRSLEEGSVVLNTLSPSSTSPSNPPITGPNSLSYTSSALSPYMTTPKAPRLAMMPDS.

In terms of domain architecture, MARVEL spans F18–R169. 4 helical membrane passes run I25–G45, C66–I86, L104–L124, and A145–F165. The segment at S191–S233 is disordered. Polar residues predominate over residues G204 to M219.

Belongs to the synaptogyrin family.

Its subcellular location is the membrane. This is Synaptogyrin-4 (Syngr4) from Mus musculus (Mouse).